A 104-amino-acid polypeptide reads, in one-letter code: Large ribosomal subunit protein uL23 (104 aa).

Belongs to the universal ribosomal protein uL23 family. In terms of assembly, part of the 50S ribosomal subunit. Contacts protein L29, and trigger factor when it is bound to the ribosome.

Functionally, one of the early assembly proteins it binds 23S rRNA. One of the proteins that surrounds the polypeptide exit tunnel on the outside of the ribosome. Forms the main docking site for trigger factor binding to the ribosome. The polypeptide is Large ribosomal subunit protein uL23 (Leptospira interrogans serogroup Icterohaemorrhagiae serovar copenhageni (strain Fiocruz L1-130)).